The primary structure comprises 374 residues: Queuine tRNA-ribosyltransferase (374 aa).

The active-site Proton acceptor is the Asp-89. Substrate-binding positions include 89–93 (DSGGF), Asp-143, Gln-187, and Gly-214. Residues 245-251 (GVGKPED) form an RNA binding region. Asp-264 functions as the Nucleophile in the catalytic mechanism. Residues 269 to 273 (TRNAR) form an RNA binding; important for wobble base 34 recognition region. Zn(2+) contacts are provided by Cys-302, Cys-304, Cys-307, and His-333.

This sequence belongs to the queuine tRNA-ribosyltransferase family. In terms of assembly, homodimer. Within each dimer, one monomer is responsible for RNA recognition and catalysis, while the other monomer binds to the replacement base PreQ1. Zn(2+) serves as cofactor.

It catalyses the reaction 7-aminomethyl-7-carbaguanine + guanosine(34) in tRNA = 7-aminomethyl-7-carbaguanosine(34) in tRNA + guanine. The protein operates within tRNA modification; tRNA-queuosine biosynthesis. Functionally, catalyzes the base-exchange of a guanine (G) residue with the queuine precursor 7-aminomethyl-7-deazaguanine (PreQ1) at position 34 (anticodon wobble position) in tRNAs with GU(N) anticodons (tRNA-Asp, -Asn, -His and -Tyr). Catalysis occurs through a double-displacement mechanism. The nucleophile active site attacks the C1' of nucleotide 34 to detach the guanine base from the RNA, forming a covalent enzyme-RNA intermediate. The proton acceptor active site deprotonates the incoming PreQ1, allowing a nucleophilic attack on the C1' of the ribose to form the product. After dissociation, two additional enzymatic reactions on the tRNA convert PreQ1 to queuine (Q), resulting in the hypermodified nucleoside queuosine (7-(((4,5-cis-dihydroxy-2-cyclopenten-1-yl)amino)methyl)-7-deazaguanosine). This Psychromonas ingrahamii (strain DSM 17664 / CCUG 51855 / 37) protein is Queuine tRNA-ribosyltransferase.